The primary structure comprises 525 residues: Patatin-like protein 8 (525 aa).

A disordered region spans residues 1 to 50 (MNRRYEKPPPLSVSSKGKKKHFVNHTAPNTPGNYERTQTSPTLSTARSHE). The segment covering 26-46 (TAPNTPGNYERTQTSPTLSTA) has biased composition (polar residues). Residues 124 to 338 (LSIDGGGMRG…AMSNPTAAAI (215 aa)) form the PNPLA domain. The GXGXXG motif lies at 128 to 133 (GGGMRG). Residue serine 168 is the Nucleophile of the active site.

It belongs to the patatin family. As to expression, specifically expressed in roots.

Its function is as follows. Possesses non-specific lipolytic acyl hydrolase (LAH) activity. Hydrolyzes phospholipids as well as galactolipids. May play a role in disease resistance. This is Patatin-like protein 8 (PLP8) from Arabidopsis thaliana (Mouse-ear cress).